A 138-amino-acid chain; its full sequence is Translation initiation factor 2 subunit beta (138 aa).

This sequence belongs to the eIF-2-beta/eIF-5 family. Heterotrimer composed of an alpha, a beta and a gamma chain.

In terms of biological role, eIF-2 functions in the early steps of protein synthesis by forming a ternary complex with GTP and initiator tRNA. This is Translation initiation factor 2 subunit beta from Methanococcus maripaludis (strain C6 / ATCC BAA-1332).